Here is a 166-residue protein sequence, read N- to C-terminus: Protein-export protein SecB (166 aa).

The protein belongs to the SecB family. In terms of assembly, homotetramer, a dimer of dimers. One homotetramer interacts with 1 SecA dimer.

Its subcellular location is the cytoplasm. Functionally, one of the proteins required for the normal export of preproteins out of the cell cytoplasm. It is a molecular chaperone that binds to a subset of precursor proteins, maintaining them in a translocation-competent state. It also specifically binds to its receptor SecA. This is Protein-export protein SecB from Cereibacter sphaeroides (strain ATCC 17025 / ATH 2.4.3) (Rhodobacter sphaeroides).